Reading from the N-terminus, the 158-residue chain is Small ribosomal subunit protein uS10m (158 aa).

The protein belongs to the universal ribosomal protein uS10 family.

The protein localises to the mitochondrion. This chain is Small ribosomal subunit protein uS10m (mrps-10), found in Caenorhabditis briggsae.